The following is a 37-amino-acid chain: MVEALLSGIVLGLISITSAGLFVTAYLQYRRGDQLDL.

A helical membrane pass occupies residues 5–25 (LLSGIVLGLISITSAGLFVTA).

Belongs to the PetG family. The 4 large subunits of the cytochrome b6-f complex are cytochrome b6, subunit IV (17 kDa polypeptide, PetD), cytochrome f and the Rieske protein, while the 4 small subunits are PetG, PetL, PetM and PetN. The complex functions as a dimer.

The protein resides in the plastid. It localises to the chloroplast thylakoid membrane. Functionally, component of the cytochrome b6-f complex, which mediates electron transfer between photosystem II (PSII) and photosystem I (PSI), cyclic electron flow around PSI, and state transitions. PetG is required for either the stability or assembly of the cytochrome b6-f complex. This Psilotum nudum (Whisk fern) protein is Cytochrome b6-f complex subunit 5.